Here is a 399-residue protein sequence, read N- to C-terminus: Subtilisin-like protease 4 (399 aa).

A signal peptide spans 1-19 (MVCLKTLSVFLAAFAAADA). The propeptide occupies 20–118 (RAVFKTQGHK…VEQDQVVRIS (99 aa)). One can recognise an Inhibitor I9 domain in the interval 38-117 (YIVVMKDGVS…YVEQDQVVRI (80 aa)). In terms of domain architecture, Peptidase S8 spans 128–399 (SWGLGRVSHR…NRLLYNGSGQ (272 aa)). Residues aspartate 160 and histidine 191 each act as charge relay system in the active site. Asparagine 252 and asparagine 308 each carry an N-linked (GlcNAc...) asparagine glycan. The Charge relay system role is filled by serine 346. N-linked (GlcNAc...) asparagine glycosylation occurs at asparagine 395.

The protein belongs to the peptidase S8 family.

It localises to the secreted. In terms of biological role, secreted subtilisin-like serine protease with keratinolytic activity that contributes to pathogenicity. This is Subtilisin-like protease 4 (SUB4) from Arthroderma benhamiae (strain ATCC MYA-4681 / CBS 112371) (Trichophyton mentagrophytes).